A 102-amino-acid chain; its full sequence is NADH-quinone oxidoreductase subunit K (102 aa).

Helical transmembrane passes span 6–26 (MEHGLLLAAVLFCIGLCGLLI), 30–50 (LLFILMSIEIMMNASALAFVV), and 65–85 (ILVISLAAAEASIGLALLLLL).

This sequence belongs to the complex I subunit 4L family. In terms of assembly, NDH-1 is composed of 14 different subunits. Subunits NuoA, H, J, K, L, M, N constitute the membrane sector of the complex.

The protein resides in the cell inner membrane. The enzyme catalyses a quinone + NADH + 5 H(+)(in) = a quinol + NAD(+) + 4 H(+)(out). NDH-1 shuttles electrons from NADH, via FMN and iron-sulfur (Fe-S) centers, to quinones in the respiratory chain. The immediate electron acceptor for the enzyme in this species is believed to be ubiquinone. Couples the redox reaction to proton translocation (for every two electrons transferred, four hydrogen ions are translocated across the cytoplasmic membrane), and thus conserves the redox energy in a proton gradient. The sequence is that of NADH-quinone oxidoreductase subunit K from Aeromonas hydrophila subsp. hydrophila (strain ATCC 7966 / DSM 30187 / BCRC 13018 / CCUG 14551 / JCM 1027 / KCTC 2358 / NCIMB 9240 / NCTC 8049).